A 485-amino-acid polypeptide reads, in one-letter code: Bifunctional protein GlmU (485 aa).

The pyrophosphorylase stretch occupies residues 1-241; it reads MSASDFSSAV…ARELAGVNDR (241 aa). Residues 13–16, K27, Q84, and 89–90 each bind UDP-N-acetyl-alpha-D-glucosamine; these read LAAG and GT. Residue D114 participates in Mg(2+) binding. The UDP-N-acetyl-alpha-D-glucosamine site is built by G151, E166, N181, and N239. Position 239 (N239) interacts with Mg(2+). Positions 242–262 are linker; that stretch reads VQLAEAGAELNRRTVIAAMRG. The tract at residues 263-485 is N-acetyltransferase; sequence GATIVDPATT…AAQNVHNQEG (223 aa). Residues R344 and K362 each coordinate UDP-N-acetyl-alpha-D-glucosamine. The active-site Proton acceptor is H374. Residues Y377 and N388 each contribute to the UDP-N-acetyl-alpha-D-glucosamine site. Residues A391, 397–398, S416, and A434 contribute to the acetyl-CoA site; that span reads NY. The tract at residues 465 to 485 is disordered; sequence RPGTAAAQAAEAAQNVHNQEG. Residues 469–478 are compositionally biased toward low complexity; sequence AAAQAAEAAQ.

In the N-terminal section; belongs to the N-acetylglucosamine-1-phosphate uridyltransferase family. This sequence in the C-terminal section; belongs to the transferase hexapeptide repeat family. As to quaternary structure, homotrimer. Requires Mg(2+) as cofactor.

Its subcellular location is the cytoplasm. It carries out the reaction alpha-D-glucosamine 1-phosphate + acetyl-CoA = N-acetyl-alpha-D-glucosamine 1-phosphate + CoA + H(+). The enzyme catalyses N-acetyl-alpha-D-glucosamine 1-phosphate + UTP + H(+) = UDP-N-acetyl-alpha-D-glucosamine + diphosphate. The protein operates within nucleotide-sugar biosynthesis; UDP-N-acetyl-alpha-D-glucosamine biosynthesis; N-acetyl-alpha-D-glucosamine 1-phosphate from alpha-D-glucosamine 6-phosphate (route II): step 2/2. It participates in nucleotide-sugar biosynthesis; UDP-N-acetyl-alpha-D-glucosamine biosynthesis; UDP-N-acetyl-alpha-D-glucosamine from N-acetyl-alpha-D-glucosamine 1-phosphate: step 1/1. It functions in the pathway bacterial outer membrane biogenesis; LPS lipid A biosynthesis. Catalyzes the last two sequential reactions in the de novo biosynthetic pathway for UDP-N-acetylglucosamine (UDP-GlcNAc). The C-terminal domain catalyzes the transfer of acetyl group from acetyl coenzyme A to glucosamine-1-phosphate (GlcN-1-P) to produce N-acetylglucosamine-1-phosphate (GlcNAc-1-P), which is converted into UDP-GlcNAc by the transfer of uridine 5-monophosphate (from uridine 5-triphosphate), a reaction catalyzed by the N-terminal domain. The polypeptide is Bifunctional protein GlmU (Corynebacterium glutamicum (strain R)).